Reading from the N-terminus, the 185-residue chain is Somatotropin (185 aa).

C52 and C158 are disulfide-bonded. E167 is a binding site for Zn(2+). C175 and C183 form a disulfide bridge.

This sequence belongs to the somatotropin/prolactin family.

Its subcellular location is the secreted. In terms of biological role, growth hormone plays an important role in growth control and is involved in the regulation of several anabolic processes. Implicated as an osmoregulatory substance important for seawater adaptation. This is Somatotropin (gh) from Katsuwonus pelamis (Skipjack tuna).